The primary structure comprises 274 residues: GATA transcription factor 1 (274 aa).

2 disordered regions span residues 1-39 (MEME…KTGL) and 102-132 (SPVS…TAVA). The short motif at 152 to 159 (KARSKRRR) is the Nuclear localization signal element. The segment at 190–244 (LIMGRKCQHCGAEKTPQWRAGPAGPKTLCNACGVRYKSGRLVPEYRPANSPTFTA) adopts a GATA-type zinc-finger fold.

It belongs to the type IV zinc-finger family. Class A subfamily. Mostly expressed in roots. Also expressed in stems, flowers and leaves.

It localises to the nucleus. Functionally, transcriptional activator that specifically binds 5'-GATA-3' or 5'-GAT-3' motifs within gene promoters. May be involved in the regulation of some light-responsive genes. This chain is GATA transcription factor 1 (GATA1), found in Arabidopsis thaliana (Mouse-ear cress).